The chain runs to 258 residues: 3-deoxy-manno-octulosonate cytidylyltransferase (258 aa).

The protein belongs to the KdsB family.

It is found in the cytoplasm. It carries out the reaction 3-deoxy-alpha-D-manno-oct-2-ulosonate + CTP = CMP-3-deoxy-beta-D-manno-octulosonate + diphosphate. Its pathway is nucleotide-sugar biosynthesis; CMP-3-deoxy-D-manno-octulosonate biosynthesis; CMP-3-deoxy-D-manno-octulosonate from 3-deoxy-D-manno-octulosonate and CTP: step 1/1. It participates in bacterial outer membrane biogenesis; lipopolysaccharide biosynthesis. Functionally, activates KDO (a required 8-carbon sugar) for incorporation into bacterial lipopolysaccharide in Gram-negative bacteria. In Gemmatimonas aurantiaca (strain DSM 14586 / JCM 11422 / NBRC 100505 / T-27), this protein is 3-deoxy-manno-octulosonate cytidylyltransferase.